We begin with the raw amino-acid sequence, 185 residues long: Ribosome-recycling factor (185 aa).

Belongs to the RRF family.

It is found in the cytoplasm. Functionally, responsible for the release of ribosomes from messenger RNA at the termination of protein biosynthesis. May increase the efficiency of translation by recycling ribosomes from one round of translation to another. The chain is Ribosome-recycling factor from Marinomonas sp. (strain MWYL1).